A 216-amino-acid chain; its full sequence is Trimethylamine corrinoid protein 1 (216 aa).

The 92-residue stretch at 1-92 (MANKEEIIAK…EMEKRKSQTK (92 aa)) folds into the B12-binding N-terminal domain. The B12-binding domain occupies 94–216 (LGTIVIGTIE…VVSKVKAALL (123 aa)). Histidine 107 serves as a coordination point for methylcob(III)alamin.

Belongs to the methylamine corrinoid protein family. Can form a complex with MttB.

It participates in one-carbon metabolism; methanogenesis from trimethylamine. Functionally, acts probably as a methyl group carrier between MttB and either MtbA or MtaA. This Methanosarcina mazei (strain ATCC BAA-159 / DSM 3647 / Goe1 / Go1 / JCM 11833 / OCM 88) (Methanosarcina frisia) protein is Trimethylamine corrinoid protein 1 (mttC1).